Reading from the N-terminus, the 148-residue chain is Ribonuclease pancreatic (148 aa).

An N-terminal signal peptide occupies residues methionine 1–glycine 25. Lysine 32 and arginine 35 together coordinate substrate. Histidine 36 functions as the Proton acceptor in the catalytic mechanism. 4 disulfide bridges follow: cysteine 50/cysteine 108, cysteine 64/cysteine 119, cysteine 82/cysteine 134, and cysteine 89/cysteine 96. The N-linked (GlcNAc...) asparagine glycan is linked to asparagine 58. Lysine 65–threonine 69 is a substrate binding site. Asparagine 86 carries an N-linked (GlcNAc...) asparagine glycan. Residues lysine 90 and arginine 109 each coordinate substrate. Residue histidine 143 is the Proton donor of the active site.

The protein belongs to the pancreatic ribonuclease family. Monomer. Interacts with and forms tight 1:1 complexes with RNH1. Dimerization of two such complexes may occur. Interaction with RNH1 inhibits this protein. In terms of tissue distribution, pancreas.

It is found in the secreted. The catalysed reaction is an [RNA] containing cytidine + H2O = an [RNA]-3'-cytidine-3'-phosphate + a 5'-hydroxy-ribonucleotide-3'-[RNA].. The enzyme catalyses an [RNA] containing uridine + H2O = an [RNA]-3'-uridine-3'-phosphate + a 5'-hydroxy-ribonucleotide-3'-[RNA].. Functionally, endonuclease that catalyzes the cleavage of RNA on the 3' side of pyrimidine nucleotides. Acts on single-stranded and double-stranded RNA. This is Ribonuclease pancreatic (RNASE1) from Chionomys nivalis (European snow vole).